A 137-amino-acid chain; its full sequence is Large ribosomal subunit protein uL16 (137 aa).

It belongs to the universal ribosomal protein uL16 family. In terms of assembly, part of the 50S ribosomal subunit.

Binds 23S rRNA and is also seen to make contacts with the A and possibly P site tRNAs. The protein is Large ribosomal subunit protein uL16 of Streptococcus uberis (strain ATCC BAA-854 / 0140J).